The chain runs to 59 residues: Bacteriocin curvacin-A (59 aa).

A propeptide spanning residues 1-18 (MNNVKELSMTELQTITGG) is cleaved from the precursor. Cysteines 28 and 33 form a disulfide.

Belongs to the bacteriocin class IIA/YGNGV family.

It localises to the secreted. Bactericidal activity; inhibits closely related Lactobacilli, Listeria monocytogenes and ivanovvi, Enterococcus faecalis, Carnobacterium sp and Brocothrix thermosphacta. This is Bacteriocin curvacin-A (curA) from Latilactobacillus curvatus (Lactobacillus curvatus).